A 243-amino-acid polypeptide reads, in one-letter code: Epoxyqueuosine reductase QueH (243 aa).

A compositionally biased stretch (basic and acidic residues) spans 1–16 (MHRTKLEQKQPHFDAQ). A disordered region spans residues 1-30 (MHRTKLEQKQPHFDAQKRRKKECKNSNTPF). [4Fe-4S] cluster-binding residues include Cys-49, Cys-50, Cys-128, and Cys-131. Cys-211 and Cys-213 form a disulfide bridge.

Belongs to the QueH family.

It catalyses the reaction epoxyqueuosine(34) in tRNA + AH2 = queuosine(34) in tRNA + A + H2O. The protein operates within tRNA modification; tRNA-queuosine biosynthesis. Its function is as follows. Catalyzes the conversion of epoxyqueuosine (oQ) to queuosine (Q), which is a hypermodified base found in the wobble positions of tRNA(Asp), tRNA(Asn), tRNA(His) and tRNA(Tyr). The polypeptide is Epoxyqueuosine reductase QueH (Histophilus somni (strain 129Pt) (Haemophilus somnus)).